We begin with the raw amino-acid sequence, 440 residues long: MGIKNLKSVLLLKHSLKVLDSAVKSKEIYVDFLGLFMAIAYSVTSTAMLHHIIKEKFKFIHSIADNVTVFVDRGSISLKTSLREKRKQSLKNQYKRKQEELKNLEIAIDNLSVDDEMYEEQKESLFSKIDKNSYYMFLADKKNMEAIITDVLASLKNTEIYYCDHIDAEFMMCCRAREYYTNNGTWPSILSSDQDTICLVCVDTQEKILYDTKSVYKLSPNKYTSYLTKLIVLTNGCDFFRGLYGISINKDNYMRYELFTEFNRENAFRSIAHKNYSLNNSNTDENIDEISTNIDVIFDFINHYTSLNEDAYKFEDLPDIRVKDFLDVMVRSKWYEAKNKYDLGSDILQNIYNVYKVHRRNYEKEKETNILKMIESYKYRNIKINTITTFIKLLGIETSDSICVLGILAPSELYIGFEGRFYFNKTSIIKSSPKLININI.

Belongs to the poxviruses G5 family.

This Fowlpox virus (strain NVSL) (FPV) protein is Protein FPV117.